A 145-amino-acid polypeptide reads, in one-letter code: UPF0201 protein SSO1042 (145 aa).

It belongs to the UPF0201 family.

This Saccharolobus solfataricus (strain ATCC 35092 / DSM 1617 / JCM 11322 / P2) (Sulfolobus solfataricus) protein is UPF0201 protein SSO1042.